The chain runs to 365 residues: Peptide chain release factor 2 (365 aa).

Gln251 carries the post-translational modification N5-methylglutamine.

It belongs to the prokaryotic/mitochondrial release factor family. In terms of processing, methylated by PrmC. Methylation increases the termination efficiency of RF2.

It localises to the cytoplasm. In terms of biological role, peptide chain release factor 2 directs the termination of translation in response to the peptide chain termination codons UGA and UAA. The sequence is that of Peptide chain release factor 2 from Campylobacter jejuni subsp. jejuni serotype O:6 (strain 81116 / NCTC 11828).